The chain runs to 90 residues: Probable Fe(2+)-trafficking protein (90 aa).

This sequence belongs to the Fe(2+)-trafficking protein family.

Its function is as follows. Could be a mediator in iron transactions between iron acquisition and iron-requiring processes, such as synthesis and/or repair of Fe-S clusters in biosynthetic enzymes. In Variovorax paradoxus (strain S110), this protein is Probable Fe(2+)-trafficking protein.